A 290-amino-acid polypeptide reads, in one-letter code: Cbb3-type cytochrome c oxidase subunit CcoP (290 aa).

The tract at residues 1–22 (MSVKPTKQKPGEPPTTGHSWDG) is disordered. Topologically, residues 1–37 (MSVKPTKQKPGEPPTTGHSWDGIEEFDNPMPRWWLWT) are cytoplasmic. A helical membrane pass occupies residues 38–58 (FYVTIVWAIGYSILYPAWPLI). At 59 to 290 (NGATNGLIGH…VYVHGLGGGE (232 aa)) the chain is on the periplasmic side. Cytochrome c domains are found at residues 109-199 (YATN…LQIS) and 206-287 (ALSA…HGLG). 8 residues coordinate heme c: Cys-122, Cys-125, His-126, Met-174, Cys-219, Cys-222, His-223, and Met-264.

Belongs to the CcoP / FixP family. In terms of assembly, component of the cbb3-type cytochrome c oxidase at least composed of CcoN, CcoO, CcoQ and CcoP. Heme c is required as a cofactor.

Its subcellular location is the cell inner membrane. The protein operates within energy metabolism; oxidative phosphorylation. C-type cytochrome. Part of the cbb3-type cytochrome c oxidase complex. CcoP subunit is required for transferring electrons from donor cytochrome c via its heme groups to CcoO subunit. From there, electrons are shuttled to the catalytic binuclear center of CcoN subunit where oxygen reduction takes place. The complex also functions as a proton pump. This Cereibacter sphaeroides (strain ATCC 17023 / DSM 158 / JCM 6121 / CCUG 31486 / LMG 2827 / NBRC 12203 / NCIMB 8253 / ATH 2.4.1.) (Rhodobacter sphaeroides) protein is Cbb3-type cytochrome c oxidase subunit CcoP.